The following is a 741-amino-acid chain: Chromosome transmission fidelity protein 18 (741 aa).

Residue 183-190 (GPPGIGKT) coordinates ATP.

The protein belongs to the activator 1 small subunits family. CTF18 subfamily. Component of the CTF18-RFC complex, which consists of CTF18, CTF8, DCC1, RFC2, RFC3, RFC4 and RFC5. CTF18 interacts with ECO1.

The protein localises to the nucleus. Functionally, essential for the fidelity of chromosome transmission. Required for the DNA replication block checkpoint. Component of the RFC-like complex CTF18-RFC which is required for efficient establishment of chromosome cohesion during S-phase and may load or unload POL30/PCNA. During a clamp loading circle, the RFC:clamp complex binds to DNA and the recognition of the double-stranded/single-stranded junction stimulates ATP hydrolysis by RFC. The complex presumably provides bipartite ATP sites in which one subunit supplies a catalytic site for hydrolysis of ATP bound to the neighboring subunit. Dissociation of RFC from the clamp leaves the clamp encircling DNA. The chain is Chromosome transmission fidelity protein 18 (CTF18) from Saccharomyces cerevisiae (strain ATCC 204508 / S288c) (Baker's yeast).